A 1063-amino-acid polypeptide reads, in one-letter code: Retinoblastoma-like protein 1 (1063 aa).

Phosphothreonine is present on residues threonine 332, threonine 369, and threonine 385. Residues 383–584 (VTTPVASATQ…WEALHASANR (202 aa)) are domain A. The segment at 383–944 (VTTPVASATQ…GRVKSFALKY (562 aa)) is pocket; binds T and E1A. The tract at residues 585–779 (VPSCEEVIFP…AQDAHLTGVS (195 aa)) is spacer. Phosphoserine occurs at positions 640, 650, 748, and 761. A domain B region spans residues 780–944 (KPKRTGSLAL…GRVKSFALKY (165 aa)). Serine 959, serine 970, and serine 983 each carry phosphoserine. Threonine 992 is modified (phosphothreonine). Phosphoserine is present on residues serine 1004 and serine 1036.

It belongs to the retinoblastoma protein (RB) family. In terms of assembly, component of the DREAM complex (also named LINC complex) at least composed of E2F4, E2F5, LIN9, LIN37, LIN52, LIN54, MYBL1, MYBL2, RBL1, RBL2, RBBP4, TFDP1 and TFDP2. The complex exists in quiescent cells where it represses cell cycle-dependent genes. It dissociates in S phase when LIN9, LIN37, LIN52 and LIN54 form a subcomplex that binds to MYBL2. Interacts with AATF. Interacts with KDM5A. Interacts with KMT5B and KMT5C. Interacts with USP4. Interacts with RBBP9. Cell-cycle arrest properties are inactivated by phosphorylation on Thr-332, Ser-640, Ser-959 and Ser-970 by CDK4. Highly expressed in fetal heart and liver. Expressed at low levels in all other fetal tissues except skeletal muscle. High levels in neonatal spleen and thymus with low levels in other tissues. In adult, highly expressed in testis. Barely detectable in other tissues.

The protein localises to the nucleus. Key regulator of entry into cell division. Directly involved in heterochromatin formation by maintaining overall chromatin structure and, in particular, that of constitutive heterochromatin by stabilizing histone methylation. Recruits and targets histone methyltransferases KMT5B and KMT5C, leading to epigenetic transcriptional repression. Controls histone H4 'Lys-20' trimethylation. Probably acts as a transcription repressor by recruiting chromatin-modifying enzymes to promoters. Potent inhibitor of E2F-mediated trans-activation. May act as a tumor suppressor. The polypeptide is Retinoblastoma-like protein 1 (Rbl1) (Mus musculus (Mouse)).